The primary structure comprises 224 residues: Cytidylate kinase (224 aa).

12-20 (GPAGAGKST) contacts ATP.

This sequence belongs to the cytidylate kinase family. Type 1 subfamily.

It localises to the cytoplasm. The catalysed reaction is CMP + ATP = CDP + ADP. It carries out the reaction dCMP + ATP = dCDP + ADP. The chain is Cytidylate kinase from Caldanaerobacter subterraneus subsp. tengcongensis (strain DSM 15242 / JCM 11007 / NBRC 100824 / MB4) (Thermoanaerobacter tengcongensis).